Reading from the N-terminus, the 367-residue chain is Glutamate 5-kinase (367 aa).

Lysine 10 serves as a coordination point for ATP. Residues serine 50, aspartate 137, and asparagine 149 each contribute to the substrate site. Residues 169 to 170 (TD) and 211 to 217 (TGGMETK) contribute to the ATP site. One can recognise a PUA domain in the interval 275–353 (AGDITVDDGA…QDISDILGYE (79 aa)).

It belongs to the glutamate 5-kinase family.

The protein resides in the cytoplasm. The catalysed reaction is L-glutamate + ATP = L-glutamyl 5-phosphate + ADP. It participates in amino-acid biosynthesis; L-proline biosynthesis; L-glutamate 5-semialdehyde from L-glutamate: step 1/2. In terms of biological role, catalyzes the transfer of a phosphate group to glutamate to form L-glutamate 5-phosphate. The chain is Glutamate 5-kinase from Sodalis glossinidius (strain morsitans).